Reading from the N-terminus, the 246-residue chain is UDP-N-acetyl-D-mannosaminuronic acid transferase (246 aa).

It belongs to the glycosyltransferase 26 family.

It carries out the reaction UDP-N-acetyl-alpha-D-mannosaminouronate + N-acetyl-alpha-D-glucosaminyl-di-trans,octa-cis-undecaprenyl diphosphate = beta-D-ManNAcA-(1-&gt;4)-alpha-D-GlcNAc-di-trans,octa-cis-undecaprenyl diphosphate + UDP + H(+). It participates in bacterial outer membrane biogenesis; enterobacterial common antigen biosynthesis. In terms of biological role, catalyzes the synthesis of Und-PP-GlcNAc-ManNAcA (Lipid II), the second lipid-linked intermediate involved in enterobacterial common antigen (ECA) synthesis. This Salmonella agona (strain SL483) protein is UDP-N-acetyl-D-mannosaminuronic acid transferase.